The primary structure comprises 498 residues: Glycerol kinase (498 aa).

Thr12 contributes to the ADP binding site. Residues Thr12, Thr13, and Ser14 each contribute to the ATP site. Thr12 provides a ligand contact to sn-glycerol 3-phosphate. Arg16 lines the ADP pocket. The sn-glycerol 3-phosphate site is built by Arg82, Glu83, Tyr135, and Asp245. Positions 82, 83, 135, 245, and 246 each coordinate glycerol. ADP-binding residues include Thr267 and Gly310. 4 residues coordinate ATP: Thr267, Gly310, Gln314, and Gly411. Residues Gly411 and Asn415 each coordinate ADP.

This sequence belongs to the FGGY kinase family. In terms of assembly, homotetramer and homodimer (in equilibrium).

The catalysed reaction is glycerol + ATP = sn-glycerol 3-phosphate + ADP + H(+). It functions in the pathway polyol metabolism; glycerol degradation via glycerol kinase pathway; sn-glycerol 3-phosphate from glycerol: step 1/1. Its activity is regulated as follows. Activated by phosphorylation and inhibited by fructose 1,6-bisphosphate (FBP). Key enzyme in the regulation of glycerol uptake and metabolism. Catalyzes the phosphorylation of glycerol to yield sn-glycerol 3-phosphate. The protein is Glycerol kinase of Clostridium botulinum (strain Alaska E43 / Type E3).